A 347-amino-acid chain; its full sequence is Quinolinate synthase (347 aa).

The iminosuccinate site is built by histidine 47 and serine 68. Position 113 (cysteine 113) interacts with [4Fe-4S] cluster. Residues 139-141 (YAN) and serine 156 contribute to the iminosuccinate site. Cysteine 200 contributes to the [4Fe-4S] cluster binding site. Iminosuccinate is bound by residues 226 to 228 (HPE) and threonine 243. Position 297 (cysteine 297) interacts with [4Fe-4S] cluster.

This sequence belongs to the quinolinate synthase family. Type 1 subfamily. The cofactor is [4Fe-4S] cluster.

It localises to the cytoplasm. The enzyme catalyses iminosuccinate + dihydroxyacetone phosphate = quinolinate + phosphate + 2 H2O + H(+). Its pathway is cofactor biosynthesis; NAD(+) biosynthesis; quinolinate from iminoaspartate: step 1/1. Catalyzes the condensation of iminoaspartate with dihydroxyacetone phosphate to form quinolinate. The chain is Quinolinate synthase from Salmonella agona (strain SL483).